The sequence spans 229 residues: Golgi to ER traffic protein 1 (229 aa).

Topologically, residues 1-14 (MGILAALDLHPYTL) are lumenal. A helical transmembrane segment spans residues 15–34 (VVSSFTVLLIQQLVGFIGKS). Residues 35–122 (TIQEFAWLFY…KINSLVGVVL (88 aa)) are Cytoplasmic-facing. A coiled-coil region spans residues 60 to 117 (HTKKQEELHKLNREKRSISAQDEYAKWTKLNRQAEKLTAEVKSLSDDIAKDKSKINSL). A helical membrane pass occupies residues 123–143 (LFLTTLPLWVFRLWFRKSVLF). The Lumenal segment spans residues 144 to 167 (YLPTGVFPYYVERVLAIPFFASGS). Residues 168–184 (VGLTVWMFAVNNVISSV) form a helical membrane-spanning segment. The Cytoplasmic segment spans residues 185–229 (LFLLTFPFKPSVPIPIRQTKVEEVVPESAESKESSPEVIDIADAN). Residues 210-219 (PESAESKESS) show a composition bias toward basic and acidic residues. Residues 210-229 (PESAESKESSPEVIDIADAN) form a disordered region.

Belongs to the WRB/GET1 family. As to quaternary structure, component of the Golgi to ER traffic (GET) complex, which is composed of GET1, GET2 and GET3. Within the complex, GET1 and GET2 form a heterotetramer which is stabilized by phosphatidylinositol binding and which binds to the GET3 homodimer.

It is found in the endoplasmic reticulum membrane. Its subcellular location is the golgi apparatus membrane. Its function is as follows. Required for the post-translational delivery of tail-anchored (TA) proteins to the endoplasmic reticulum. Together with GET2, acts as a membrane receptor for soluble GET3, which recognizes and selectively binds the transmembrane domain of TA proteins in the cytosol. The GET complex cooperates with the HDEL receptor ERD2 to mediate the ATP-dependent retrieval of resident ER proteins that contain a C-terminal H-D-E-L retention signal from the Golgi to the ER. The chain is Golgi to ER traffic protein 1 from Scheffersomyces stipitis (strain ATCC 58785 / CBS 6054 / NBRC 10063 / NRRL Y-11545) (Yeast).